A 400-amino-acid chain; its full sequence is Serine/threonine-protein kinase AFC3 (400 aa).

Residues 1 to 29 are disordered; sequence MIANGFESMDKERVRKRPRMTWDEAPAEP. The Protein kinase domain maps to 71-396; that stretch reads YKILSKMGEG…ANEALDHPFF (326 aa). ATP contacts are provided by residues 77–85 and lysine 100; that span reads MGEGTFGRV. Aspartate 196 functions as the Proton acceptor in the catalytic mechanism.

It belongs to the protein kinase superfamily. CMGC Ser/Thr protein kinase family. Lammer subfamily.

It catalyses the reaction L-seryl-[protein] + ATP = O-phospho-L-seryl-[protein] + ADP + H(+). The enzyme catalyses L-threonyl-[protein] + ATP = O-phospho-L-threonyl-[protein] + ADP + H(+). The catalysed reaction is L-tyrosyl-[protein] + ATP = O-phospho-L-tyrosyl-[protein] + ADP + H(+). The polypeptide is Serine/threonine-protein kinase AFC3 (AFC3) (Arabidopsis thaliana (Mouse-ear cress)).